Consider the following 429-residue polypeptide: Cholesterol 7-desaturase nvd (429 aa).

Residues 23–43 (FVICLWTLAVTFIRIYWIFFV) traverse the membrane as a helical segment. One can recognise a Rieske domain in the interval 98-201 (YGILKSSQLK…SQEVDGFIFI (104 aa)). Residues Cys138, His140, Cys158, and His161 each coordinate [2Fe-2S] cluster.

It belongs to the cholesterol 7-desaturase family. [2Fe-2S] cluster is required as a cofactor. In terms of tissue distribution, expressed predominantly in the prothoracic gland and weakly in brain and malpighian tubules.

The protein localises to the membrane. It catalyses the reaction cholesterol + NADPH + O2 + H(+) = 7-dehydrocholesterol + NADP(+) + 2 H2O. The catalysed reaction is cholesterol + NADH + O2 + H(+) = 7-dehydrocholesterol + NAD(+) + 2 H2O. The protein operates within steroid hormone biosynthesis; dafachronic acid biosynthesis. Its function is as follows. Catalyzes the production of 7-dehydrocholesterol (7-DHC or cholesta-5,7-dien-3beta-ol) by inserting a double bond (desaturating) at the C7-C8 single bond of cholesterol. Essential regulator of steroid biosynthesis, as this reaction is the first step in the synthesis of the steroid hormone Delta(7)-dafachronic acid. Required for insect molting, metamorphosis and body growth throughout development via the regulation of ecdysteroid biosynthesis in the prothoracic gland. The protein is Cholesterol 7-desaturase nvd of Drosophila melanogaster (Fruit fly).